Reading from the N-terminus, the 187-residue chain is Methylamine dehydrogenase light chain (187 aa).

Positions 1 to 57 (MKKDTGFDSKIEKLARTTASKTGRRGFIGRLGGFLVGSALLPLLPVDRRSRLGGEVQ) form a signal peptide, tat-type signal. 6 disulfide bridges follow: Cys79/Cys144, Cys85/Cys117, Cys92/Cys177, Cys94/Cys142, Cys102/Cys133, and Cys134/Cys165. Trp113 carries the post-translational modification Tryptophylquinone. The tryptophan tryptophylquinone (Trp-Trp) cross-link spans 113 to 164 (WVASCYNPGDQQTYLIAYRDCCGKQTCGRCNCVNTQGELPVYRPEFNNDIVW).

Belongs to the aromatic amine dehydrogenase light chain family. In terms of assembly, heterotetramer of two light and two heavy chains. Tryptophan tryptophylquinone residue is required as a cofactor. Post-translationally, predicted to be exported by the Tat system. The position of the signal peptide cleavage has not been experimentally proven. In terms of processing, tryptophan tryptophylquinone (TTQ) is formed by oxidation of the indole ring of a tryptophan to form tryptophylquinone followed by covalent cross-linking with another tryptophan residue.

The protein resides in the periplasm. It catalyses the reaction 2 oxidized [amicyanin] + methylamine + H2O = 2 reduced [amicyanin] + formaldehyde + NH4(+) + 2 H(+). The protein operates within one-carbon metabolism; methylamine degradation; formaldehyde from methylamine: step 1/1. In terms of biological role, methylamine dehydrogenase carries out the oxidation of methylamine. Electrons are passed from methylamine dehydrogenase to amicyanin. This Methylophilus methylotrophus (Bacterium W3A1) protein is Methylamine dehydrogenase light chain (mauA).